We begin with the raw amino-acid sequence, 610 residues long: Aspartate--tRNA(Asp/Asn) ligase (610 aa).

Glu-177 contacts L-aspartate. The segment at 201–204 (QLFK) is aspartate. L-aspartate is bound at residue Arg-223. ATP is bound by residues 223-225 (RDE) and Gln-232. Residue His-461 coordinates L-aspartate. Residue Glu-499 coordinates ATP. Arg-506 provides a ligand contact to L-aspartate. 551–554 (GVDR) lines the ATP pocket.

The protein belongs to the class-II aminoacyl-tRNA synthetase family. Type 1 subfamily. In terms of assembly, homodimer.

Its subcellular location is the cytoplasm. It carries out the reaction tRNA(Asx) + L-aspartate + ATP = L-aspartyl-tRNA(Asx) + AMP + diphosphate. Functionally, aspartyl-tRNA synthetase with relaxed tRNA specificity since it is able to aspartylate not only its cognate tRNA(Asp) but also tRNA(Asn). Reaction proceeds in two steps: L-aspartate is first activated by ATP to form Asp-AMP and then transferred to the acceptor end of tRNA(Asp/Asn). This chain is Aspartate--tRNA(Asp/Asn) ligase, found in Parasynechococcus marenigrum (strain WH8102).